The sequence spans 396 residues: Homoserine O-acetyltransferase (396 aa).

Residues 53 to 370 enclose the AB hydrolase-1 domain; that stretch reads NAILVCHALT…DRGHDAFLLE (318 aa). The Nucleophile role is filled by Ser158. Substrate is bound at residue Arg228. Catalysis depends on residues Asp331 and His364. Asp365 provides a ligand contact to substrate.

The protein belongs to the AB hydrolase superfamily. MetX family. In terms of assembly, homodimer.

The protein localises to the cytoplasm. It catalyses the reaction L-homoserine + acetyl-CoA = O-acetyl-L-homoserine + CoA. It functions in the pathway amino-acid biosynthesis; L-methionine biosynthesis via de novo pathway; O-acetyl-L-homoserine from L-homoserine: step 1/1. Its function is as follows. Transfers an acetyl group from acetyl-CoA to L-homoserine, forming acetyl-L-homoserine. In Gluconobacter oxydans (strain 621H) (Gluconobacter suboxydans), this protein is Homoserine O-acetyltransferase.